Here is a 157-residue protein sequence, read N- to C-terminus: Protein Smg homolog (157 aa).

This sequence belongs to the Smg family.

In Aliivibrio salmonicida (strain LFI1238) (Vibrio salmonicida (strain LFI1238)), this protein is Protein Smg homolog.